Here is a 357-residue protein sequence, read N- to C-terminus: O-methyltransferase pgmB (357 aa).

D206 serves as a coordination point for S-adenosyl-L-methionine. Residue H256 is the Proton acceptor of the active site.

It belongs to the class I-like SAM-binding methyltransferase superfamily. Cation-independent O-methyltransferase family.

Its pathway is pigment biosynthesis. It participates in secondary metabolite biosynthesis. Its function is as follows. O-methyltransferase; part of the gene cluster that mediates the biosynthesis of pleosporalin A, ascomycone A, as well as a third cryptic naphthoquinone derived pigment, all responsible for the coloration of conidia. Specifically methylates position C-6 of the pgmA product 3-acetonyl-1,6,8-trihydroxy-2-naphthaldehyde to yield fusarubinaldehyde. The pathway begins with the biosynthesis of the cyclized heptaketide 3-acetonyl-1,6,8-trihydroxy-2-naphthaldehyde by the NR-PKS pgmA. The C-6 hydroxyl group is further methylated by the O-methyltransferase pgmB to yield fusarubinaldehyde which is in turn oxidized by the cytochrome P450 monooxygenase pgmC at C-9. The C-1 hydroxyl group is then methylated spontaneously. Although pgmE, pgmD and pgmH are essential for the production of pleosporalin A, it is not the case for the 2 other final products and it remains difficult to assign a specific function to each enzyme. PgmF and pgmG seem not to be involved in pigment biosynthesis although they were regulated by the cluster-specific transcription factor pgmR. The polypeptide is O-methyltransferase pgmB (Aspergillus terreus (strain NIH 2624 / FGSC A1156)).